The primary structure comprises 367 residues: Leucine carboxyl methyltransferase 1 (367 aa).

S-adenosyl-L-methionine-binding positions include arginine 84, glycine 109, aspartate 132, 187–188 (DL), and glutamate 212.

Belongs to the methyltransferase superfamily. LCMT family.

It catalyses the reaction [phosphatase 2A protein]-C-terminal L-leucine + S-adenosyl-L-methionine = [phosphatase 2A protein]-C-terminal L-leucine methyl ester + S-adenosyl-L-homocysteine. Functionally, methylates the carboxyl group of the C-terminal leucine residue of protein phosphatase 2A catalytic subunits to form alpha-leucine ester residues. This chain is Leucine carboxyl methyltransferase 1 (PPM1), found in Candida albicans (strain SC5314 / ATCC MYA-2876) (Yeast).